Consider the following 101-residue polypeptide: ATP-dependent Clp protease adapter protein ClpS 2 (101 aa).

It belongs to the ClpS family. Binds to the N-terminal domain of the chaperone ClpA.

Involved in the modulation of the specificity of the ClpAP-mediated ATP-dependent protein degradation. The polypeptide is ATP-dependent Clp protease adapter protein ClpS 2 (Rhizobium meliloti (strain 1021) (Ensifer meliloti)).